We begin with the raw amino-acid sequence, 196 residues long: Holliday junction branch migration complex subunit RuvA (196 aa).

The domain I stretch occupies residues 1 to 63; sequence MINKIHGKVI…ENELKLFGFL (63 aa). The domain II stretch occupies residues 64–139; it reads NSDERETFKS…KLLINNELES (76 aa). Residue Ser-139 is a region of interest, flexible linker. A domain III region spans residues 139–196; that stretch reads SSLFGFKELEESIVSMGFDRKIVNSKLKEACDLIEFSNLKDSEKEQFLFKEVLKRMSN.

Belongs to the RuvA family. Homotetramer. Forms an RuvA(8)-RuvB(12)-Holliday junction (HJ) complex. HJ DNA is sandwiched between 2 RuvA tetramers; dsDNA enters through RuvA and exits via RuvB. An RuvB hexamer assembles on each DNA strand where it exits the tetramer. Each RuvB hexamer is contacted by two RuvA subunits (via domain III) on 2 adjacent RuvB subunits; this complex drives branch migration. In the full resolvosome a probable DNA-RuvA(4)-RuvB(12)-RuvC(2) complex forms which resolves the HJ.

The protein localises to the cytoplasm. In terms of biological role, the RuvA-RuvB-RuvC complex processes Holliday junction (HJ) DNA during genetic recombination and DNA repair, while the RuvA-RuvB complex plays an important role in the rescue of blocked DNA replication forks via replication fork reversal (RFR). RuvA specifically binds to HJ cruciform DNA, conferring on it an open structure. The RuvB hexamer acts as an ATP-dependent pump, pulling dsDNA into and through the RuvAB complex. HJ branch migration allows RuvC to scan DNA until it finds its consensus sequence, where it cleaves and resolves the cruciform DNA. This chain is Holliday junction branch migration complex subunit RuvA, found in Borrelia garinii subsp. bavariensis (strain ATCC BAA-2496 / DSM 23469 / PBi) (Borreliella bavariensis).